Consider the following 207-residue polypeptide: Sodium/potassium-transporting ATPase subunit beta-1-interacting protein 1 (207 aa).

3 helical membrane passes run 2-22, 35-55, and 62-82; these read GRCS…AAAL, APIL…LGTL, and LILY…IICF. An N-linked (GlcNAc...) asparagine glycan is attached at Asn-100. A helical transmembrane segment spans residues 147-167; it reads ALSSALQIFLALFGFVYACYV.

Belongs to the NKAIN family. As to quaternary structure, interacts with atp1b1 C-terminus.

It localises to the cell membrane. This chain is Sodium/potassium-transporting ATPase subunit beta-1-interacting protein 1 (nkain1), found in Xenopus tropicalis (Western clawed frog).